Reading from the N-terminus, the 499-residue chain is Putative DBH-like monooxygenase protein 2 (499 aa).

Positions 1–16 are cleaved as a signal peptide; the sequence is MAHDLLFRLFPLLALG. The region spanning 40–156 is the DOMON domain; it reads NVIFLRWDFD…NTVRVLAAYG (117 aa). Residue Tyr-209 is part of the active site. 2 disulfide bridges follow: Cys-211-Cys-261 and Cys-248-Cys-271. The N-linked (GlcNAc...) asparagine glycan is linked to Asn-236. Residues His-241 and His-242 each coordinate Cu cation. Residue Asn-250 is glycosylated (N-linked (GlcNAc...) asparagine). Positions 308, 389, and 391 each coordinate Cu cation. 2 disulfides stabilise this stretch: Cys-365-Cys-480 and Cys-443-Cys-465. His-389 is an active-site residue. Asn-404 carries an N-linked (GlcNAc...) asparagine glycan. Residue Met-464 coordinates Cu cation. Asn-476 is a glycosylation site (N-linked (GlcNAc...) asparagine).

Belongs to the copper type II ascorbate-dependent monooxygenase family. It depends on Cu(2+) as a cofactor.

The polypeptide is Putative DBH-like monooxygenase protein 2 (MOXD2P) (Homo sapiens (Human)).